We begin with the raw amino-acid sequence, 63 residues long: SERF-like protein C1705.02 (63 aa).

Residues 1 to 13 show a composition bias toward basic and acidic residues; sequence MSRGNQRDVDRAR. Positions 1-63 are disordered; it reads MSRGNQRDVD…EANGGSKGKK (63 aa). Over residues 14–24 the composition is skewed to basic residues; that stretch reads NLKKSQASKKK. Over residues 25-35 the composition is skewed to basic and acidic residues; sequence QAGDPTKRLEA.

The protein belongs to the SERF family.

The protein resides in the cytoplasm. The protein localises to the nucleus. It localises to the nucleolus. The sequence is that of SERF-like protein C1705.02 from Schizosaccharomyces pombe (strain 972 / ATCC 24843) (Fission yeast).